Consider the following 627-residue polypeptide: Chaperone protein DnaK (627 aa).

Threonine 197 bears the Phosphothreonine; by autocatalysis mark. Residues 598 to 611 show a composition bias toward low complexity; the sequence is AYAKEQGGQQGAAD. The interval 598 to 627 is disordered; it reads AYAKEQGGQQGAADAGKKADDDDVIDAEVE. Residues 618–627 show a composition bias toward acidic residues; sequence DDDVIDAEVE.

This sequence belongs to the heat shock protein 70 family.

Functionally, acts as a chaperone. The protein is Chaperone protein DnaK of Sulfurovum sp. (strain NBC37-1).